The primary structure comprises 343 residues: Cytoplasmic tRNA 2-thiolation protein 1 (343 aa).

This sequence belongs to the TtcA family. CTU1/NCS6/ATPBD3 subfamily.

Its subcellular location is the cytoplasm. The protein operates within tRNA modification; 5-methoxycarbonylmethyl-2-thiouridine-tRNA biosynthesis. Plays a central role in 2-thiolation of mcm(5)S(2)U at tRNA wobble positions of tRNA(Lys), tRNA(Glu) and tRNA(Gln). Directly binds tRNAs and probably acts by catalyzing adenylation of tRNAs, an intermediate required for 2-thiolation. It is unclear whether it acts as a sulfurtransferase that transfers sulfur from thiocarboxylated URM1 onto the uridine of tRNAs at wobble position. This is Cytoplasmic tRNA 2-thiolation protein 1 from Drosophila virilis (Fruit fly).